The following is a 473-amino-acid chain: Mogroside IIIx synthase (473 aa).

The active-site Proton acceptor is histidine 21. The active-site Charge relay is the aspartate 123. Residues threonine 274, glutamine 337, tryptophan 355, asparagine 356, serine 357, glutamate 360, aspartate 376, and glutamine 377 each coordinate UDP-alpha-D-glucose.

Belongs to the UDP-glycosyltransferase family. In terms of tissue distribution, highly expressed in mature fruits.

It catalyses the reaction mogroside IIE + UDP-alpha-D-glucose = mogroside IIIX + UDP + H(+). It carries out the reaction mogroside III + UDP-alpha-D-glucose = siamenoside I + UDP + H(+). The protein operates within secondary metabolite biosynthesis; terpenoid biosynthesis. Functionally, UDP-glycosyltransferase involved in the biosynthesis of cucurbitacin and mogroside tetracyclic triterpene natural products (e.g. siamenoside I and mogrosides IV, V and VI). Cucurbitacins have cytotoxic properties and exhibit deterrent taste as a defense barrier against herbivores. Mogrosides are nonsugar highly oxygenated compounds used as high-intensity zero-calorie sweeteners; they also possess pharmacological properties such as regulating immunity, lowering blood sugar and lipid levels, protecting the liver, and acting as antioxidants and antitumor agents. Catalyzes the branched glucosylations of mogroside II-E and mogroside III. In Siraitia grosvenorii (Monk's fruit), this protein is Mogroside IIIx synthase.